A 448-amino-acid chain; its full sequence is Histidine--tRNA ligase (448 aa).

Disordered stretches follow at residues 1–20 (MAIK…SPKL) and 428–448 (AGQA…QEKA).

This sequence belongs to the class-II aminoacyl-tRNA synthetase family. Homodimer.

The protein localises to the cytoplasm. It catalyses the reaction tRNA(His) + L-histidine + ATP = L-histidyl-tRNA(His) + AMP + diphosphate + H(+). The protein is Histidine--tRNA ligase of Deinococcus deserti (strain DSM 17065 / CIP 109153 / LMG 22923 / VCD115).